We begin with the raw amino-acid sequence, 354 residues long: CCN family member 3 (354 aa).

A signal peptide spans 1–21 (MSLFLRKRCLCLGFLLFHLLS). The IGFBP N-terminal domain occupies 25–99 (ASLRCPSRCP…NNQTGICMVP (75 aa)). 6 disulfides stabilise this stretch: C29–C55, C33–C57, C37–C58, C44–C61, C69–C83, and C75–C96. Residue N91 is glycosylated (N-linked (GlcNAc...) asparagine). The region spanning 102–168 (DNCVFDGVIY…GECCEKWTCG (67 aa)) is the VWFC domain. Positions 202 to 247 (NCIEQTTEWSACSKSCGMGVSTRVTNRNRQCEMVKQTRLCIVRPCE) constitute a TSP type-1 domain. C241 is lipidated: S-palmitoyl cysteine. 5 cysteine pairs are disulfide-bonded: C261-C298, C278-C312, C289-C328, C292-C330, and C297-C334. The CTCK domain maps to 261-335 (CLRTKKSLKA…GTCTCYSNCP (75 aa)). N277 carries N-linked (GlcNAc...) asparagine glycosylation.

The protein belongs to the CCN family. As to quaternary structure, interacts with FBLN1. Interacts (via CTCK domain) with NOTCH1 (via the EGF-like repeat region). Interacts with GJA1/CX43. Interacts with ITGA5:ITGB1, ITGAV:ITGB3 and ITGAV:ITGB5. Interacts with ZDHHC22; the interaction may lead to CCN3 palmitoylation. May be palmitoylated on Cys-241, which is important for extracellular secretion. Expressed in large vessels including the ascending aorta, carotid arteries, and the thoracic aorta, in medium-sized vessels such as coronary arteries and small pulmonary veins and also in small vessels. In addition, also found to be present in the heart (at protein level). Expressed in astrocytes (at protein level). Detected in brain, bone, lung and muscle tissues. Expressed in skin, expression highly increases 5 days post-wounding, peaking on the 7th day to decline after 9 days. Expressed in pancreatic ducts and beta-cell islets. Expressed in the brain, in arcuate nucleus ESR1/KISS1 neurons, during lactation (at protein level).

It localises to the secreted. Its subcellular location is the cytoplasm. It is found in the cell junction. The protein resides in the gap junction. Immediate-early protein playing a role in various cellular processes including proliferation, adhesion, migration, differentiation and survival. Acts by binding to integrins or membrane receptors such as NOTCH1. Essential regulator of hematopoietic stem and progenitor cell function. Inhibits myogenic differentiation through the activation of Notch-signaling pathway. Inhibits vascular smooth muscle cells proliferation by increasing expression of cell-cycle regulators such as CDKN2B or CDKN1A independently of TGFB1 signaling. Ligand of integrins ITGAV:ITGB3 and ITGA5:ITGB1, acts directly upon endothelial cells to stimulate pro-angiogenic activities and induces angiogenesis. In endothelial cells, supports cell adhesion, induces directed cell migration (chemotaxis) and promotes cell survival. Also plays a role in cutaneous wound healing acting as integrin receptor ligand. Supports skin fibroblast adhesion through ITGA5:ITGB1 and ITGA6:ITGB1 and induces fibroblast chemotaxis through ITGAV:ITGB5. Seems to enhance bFGF-induced DNA synthesis in fibroblasts. Involved in bone regeneration as a negative regulator. Enhances the articular chondrocytic phenotype, whereas it repressed the one representing endochondral ossification. Impairs pancreatic beta-cell function, inhibits beta-cell proliferation and insulin secretion. Plays a role as negative regulator of endothelial pro-inflammatory activation reducing monocyte adhesion, its anti-inflammatory effects occur secondary to the inhibition of NF-kappaB signaling pathway. Contributes to the control and coordination of inflammatory processes in atherosclerosis. Attenuates inflammatory pain through regulation of IL1B- and TNF-induced MMP9, MMP2 and CCL2 expression. Inhibits MMP9 expression through ITGB1 engagement. Brain osteoanabolic hormone. During lactation, maintains the maternal skeleton and viability of offspring. In this context, may act on osteochondral skeletal stem cells. This Mus musculus (Mouse) protein is CCN family member 3 (Ccn3).